The sequence spans 571 residues: Potassium-transporting ATPase potassium-binding subunit (571 aa).

Transmembrane regions (helical) follow at residues 3 to 23 (LIGW…VKPL), 64 to 84 (LGYG…LYAI), 135 to 155 (LGLT…AVAL), 179 to 199 (LYVL…QGMP), 254 to 274 (LANL…TNVF), 284 to 304 (GWAI…VTYA), 330 to 350 (FGIV…CGAV), 357 to 376 (FTAL…EIIV), 421 to 441 (MLAI…ATVL), 488 to 508 (LALG…AIAG), and 527 to 547 (GGLF…LTFF).

Belongs to the KdpA family. In terms of assembly, the system is composed of three essential subunits: KdpA, KdpB and KdpC.

The protein localises to the cell inner membrane. Its function is as follows. Part of the high-affinity ATP-driven potassium transport (or Kdp) system, which catalyzes the hydrolysis of ATP coupled with the electrogenic transport of potassium into the cytoplasm. This subunit binds the periplasmic potassium ions and delivers the ions to the membrane domain of KdpB through an intramembrane tunnel. In Methylorubrum populi (strain ATCC BAA-705 / NCIMB 13946 / BJ001) (Methylobacterium populi), this protein is Potassium-transporting ATPase potassium-binding subunit.